Consider the following 374-residue polypeptide: S-adenosylmethionine:tRNA ribosyltransferase-isomerase (374 aa).

Belongs to the QueA family. As to quaternary structure, monomer.

The protein localises to the cytoplasm. The catalysed reaction is 7-aminomethyl-7-carbaguanosine(34) in tRNA + S-adenosyl-L-methionine = epoxyqueuosine(34) in tRNA + adenine + L-methionine + 2 H(+). It functions in the pathway tRNA modification; tRNA-queuosine biosynthesis. Functionally, transfers and isomerizes the ribose moiety from AdoMet to the 7-aminomethyl group of 7-deazaguanine (preQ1-tRNA) to give epoxyqueuosine (oQ-tRNA). This Prochlorococcus marinus (strain MIT 9215) protein is S-adenosylmethionine:tRNA ribosyltransferase-isomerase.